Consider the following 210-residue polypeptide: Synaptosomal-associated protein 25 (210 aa).

The interval 1-23 (MENSVENSMDPRSEQEEMQRCAD) is disordered. Residues 9–20 (MDPRSEQEEMQR) show a composition bias toward basic and acidic residues. T-SNARE coiled-coil homology domains follow at residues 23 to 85 (DQIT…LSDL) and 147 to 209 (DARE…ATKM).

The protein belongs to the SNAP-25 family.

The protein resides in the synapse. The protein localises to the synaptosome. It localises to the cell membrane. Its function is as follows. May play an important role in the synaptic function of specific neuronal systems. Associates with proteins involved in vesicle docking and membrane fusion. In Torpedo marmorata (Marbled electric ray), this protein is Synaptosomal-associated protein 25 (snap25).